Here is a 110-residue protein sequence, read N- to C-terminus: UPF0060 membrane protein Pnap_4944 (110 aa).

A run of 4 helical transmembrane segments spans residues 8-28 (ILFAVTALAEIVGCYLPWLVL), 33-53 (SLLLLVPAAMSLGLFAWLLTL), 65-85 (YGGMYIAVALGWLRFVDGIAL), and 88-108 (WDLSGAAIALVGMAVIVMQPS).

It belongs to the UPF0060 family.

The protein localises to the cell inner membrane. This Polaromonas naphthalenivorans (strain CJ2) protein is UPF0060 membrane protein Pnap_4944.